The primary structure comprises 140 residues: Small ribosomal subunit protein uS8c (140 aa).

This sequence belongs to the universal ribosomal protein uS8 family. In terms of assembly, part of the 30S ribosomal subunit.

It localises to the plastid. It is found in the chloroplast. Its function is as follows. One of the primary rRNA binding proteins, it binds directly to 16S rRNA central domain where it helps coordinate assembly of the platform of the 30S subunit. This chain is Small ribosomal subunit protein uS8c (rps8), found in Euglena gracilis.